Reading from the N-terminus, the 233-residue chain is Small ribosomal subunit protein uS3 (233 aa).

Residues 39 to 107 (IRTFLKRKLY…EVNINIKEER (69 aa)) enclose the KH type-2 domain. The segment at 211-233 (GVQPEKTEESAPAKKPRRARRGK) is disordered. Residues 213-222 (QPEKTEESAP) show a composition bias toward basic and acidic residues. Residues 224-233 (KKPRRARRGK) are compositionally biased toward basic residues.

It belongs to the universal ribosomal protein uS3 family. Part of the 30S ribosomal subunit. Forms a tight complex with proteins S10 and S14.

Binds the lower part of the 30S subunit head. Binds mRNA in the 70S ribosome, positioning it for translation. In Campylobacter lari (strain RM2100 / D67 / ATCC BAA-1060), this protein is Small ribosomal subunit protein uS3.